The sequence spans 475 residues: Ankyrin repeat, SAM and basic leucine zipper domain-containing protein 1 (475 aa).

A disordered region spans residues 1–24 (MAAAVQRGLPVAGGGESSESEDDG). Serine 17, serine 18, and serine 20 each carry phosphoserine. 6 ANK repeats span residues 45 to 74 (EKNE…SVES), 78 to 107 (YGWT…NASF), 110 to 144 (DKHT…DPNV), 148 to 177 (RLMT…EVNA), 181 to 210 (NGYT…NKML), and 214 to 243 (DGKT…PLEG). The SAM domain occupies 272–334 (SYAAFGDLEI…KILAALKELA (63 aa)).

As to quaternary structure, interacts with DDX4, PIWIL1, RANBP9 and TDRD1.

Its subcellular location is the cytoplasm. Its function is as follows. Plays a central role during spermatogenesis by repressing transposable elements and preventing their mobilization, which is essential for the germline integrity. Acts via the piRNA metabolic process, which mediates the repression of transposable elements during meiosis by forming complexes composed of piRNAs and Piwi proteins and governs the methylation and subsequent repression of transposons. Its association with pi-bodies suggests a participation in the primary piRNAs metabolic process. Required prior to the pachytene stage to facilitate the production of multiple types of piRNAs, including those associated with repeats involved in the regulation of retrotransposons. May act by mediating protein-protein interactions during germ cell maturation. The polypeptide is Ankyrin repeat, SAM and basic leucine zipper domain-containing protein 1 (ASZ1) (Loxodonta africana (African elephant)).